The sequence spans 267 residues: Stomatin-3 (267 aa).

A helical membrane pass occupies residues 17–37; sequence FVALICAWAFLLLTFPVSIFF.

Belongs to the band 7/mec-2 family.

It is found in the membrane. This is Stomatin-3 (sto-3) from Caenorhabditis elegans.